Consider the following 188-residue polypeptide: Casparian strip membrane protein 1 (188 aa).

At 1-24 (MKAGALELGHASKTTKSGVNRGMS) the chain is on the cytoplasmic side. A helical transmembrane segment spans residues 25–45 (ILDLFIRIIAIIATLGSAIAM). Topologically, residues 46–72 (GTTNETLPFFTQFVRFKAKYSDLPTFT) are extracellular. A glycan (N-linked (GlcNAc...) asparagine) is linked at asparagine 49. The helical transmembrane segment at 73–93 (FFVVANAIVSAYLVLSLGLSI) threads the bilayer. At 94–105 (YHIMRSRAQATR) the chain is on the cytoplasmic side. A helical transmembrane segment spans residues 106–126 (IALIFFDAAMLGLLTGGASAS). Topologically, residues 127–159 (AAIVYLAHKGNRKTNWFPICQQYDSFCHRTSGS) are extracellular. A helical transmembrane segment spans residues 160–180 (LVGSFAGSVLIILLIFLSAIA). Residues 181-188 (LSRQSLNH) are Cytoplasmic-facing.

The protein belongs to the Casparian strip membrane proteins (CASP) family. Homodimer and heterodimers.

Its subcellular location is the cell membrane. Its function is as follows. Regulates membrane-cell wall junctions and localized cell wall deposition. Required for establishment of the Casparian strip membrane domain (CSD) and the subsequent formation of Casparian strips, a cell wall modification of the root endodermis that determines an apoplastic barrier between the intraorganismal apoplasm and the extraorganismal apoplasm and prevents lateral diffusion. In Solanum tuberosum (Potato), this protein is Casparian strip membrane protein 1.